The chain runs to 306 residues: Acetyl-coenzyme A carboxylase carboxyl transferase subunit beta (306 aa).

The region spanning 25 to 294 (LWIKDPTSGE…VVNPSNTSST (270 aa)) is the CoA carboxyltransferase N-terminal domain. Low complexity predominate over residues 287-296 (NPSNTSSTNS). The tract at residues 287-306 (NPSNTSSTNSQASLSKAEAA) is disordered.

It belongs to the AccD/PCCB family. As to quaternary structure, acetyl-CoA carboxylase is a heterohexamer composed of biotin carboxyl carrier protein (AccB), biotin carboxylase (AccC) and two subunits each of ACCase subunit alpha (AccA) and ACCase subunit beta (AccD).

It localises to the cytoplasm. The enzyme catalyses N(6)-carboxybiotinyl-L-lysyl-[protein] + acetyl-CoA = N(6)-biotinyl-L-lysyl-[protein] + malonyl-CoA. The protein operates within lipid metabolism; malonyl-CoA biosynthesis; malonyl-CoA from acetyl-CoA: step 1/1. Component of the acetyl coenzyme A carboxylase (ACC) complex. Biotin carboxylase (BC) catalyzes the carboxylation of biotin on its carrier protein (BCCP) and then the CO(2) group is transferred by the transcarboxylase to acetyl-CoA to form malonyl-CoA. The protein is Acetyl-coenzyme A carboxylase carboxyl transferase subunit beta of Bartonella henselae (strain ATCC 49882 / DSM 28221 / CCUG 30454 / Houston 1) (Rochalimaea henselae).